A 471-amino-acid polypeptide reads, in one-letter code: Paraneoplastic antigen-like protein 8A (471 aa).

Disordered regions lie at residues 188 to 300 and 321 to 471; these read SAAG…EGSA and ASRG…PSAV. Over residues 238–247 the composition is skewed to basic residues; that stretch reads HSRRKRQKKT. The span at 256–269 shows a compositional bias: low complexity; the sequence is KKSQGSHSHSSASL. The segment covering 270–287 has biased composition (basic and acidic residues); that stretch reads KHPEADDGKNRERLEHVR.

It belongs to the PNMA family.

The sequence is that of Paraneoplastic antigen-like protein 8A (PNMA8A) from Bos taurus (Bovine).